Reading from the N-terminus, the 434-residue chain is Beta-glucuronosyltransferase GlcAT14B (434 aa).

The Cytoplasmic segment spans residues 1–21; it reads MKKLKSYYMQVRNQQQSLDRK. Residues 22–42 traverse the membrane as a signal-anchor for type II membrane protein segment; that stretch reads WILPLAIGSICSLFLLLLTNL. Over 43–434 the chain is Lumenal; that stretch reads ASSSGQTRLI…TENFRPRQCR (392 aa). N-linked (GlcNAc...) asparagine glycosylation is found at Asn138, Asn187, Asn316, and Asn392.

It belongs to the glycosyltransferase 14 family.

It localises to the golgi apparatus membrane. Its function is as follows. Beta-glucuronosyltransferase involved in the biosynthesis of type II arabinogalactan (AG). Modifies both the beta-1,6-linked galactan and beta-1,3-linked galactan present in type II AG. This is Beta-glucuronosyltransferase GlcAT14B from Arabidopsis thaliana (Mouse-ear cress).